The chain runs to 157 residues: Holo-[acyl-carrier-protein] synthase (157 aa).

Mg(2+) contacts are provided by aspartate 8 and glutamate 59.

This sequence belongs to the P-Pant transferase superfamily. AcpS family. Requires Mg(2+) as cofactor.

The protein localises to the cytoplasm. It carries out the reaction apo-[ACP] + CoA = holo-[ACP] + adenosine 3',5'-bisphosphate + H(+). Transfers the 4'-phosphopantetheine moiety from coenzyme A to a Ser of acyl-carrier-protein. In Gluconobacter oxydans (strain 621H) (Gluconobacter suboxydans), this protein is Holo-[acyl-carrier-protein] synthase.